The following is a 748-amino-acid chain: Polyribonucleotide nucleotidyltransferase (748 aa).

2 residues coordinate Mg(2+): Asp487 and Asp493. Residues 554 to 613 (PSTTTIKIDKDKIRDIIGPSGKVIKEICETSGAKIDISDDGTVSVYASDRDKLKVALDKI) enclose the KH domain. The S1 motif domain maps to 623–691 (GEIFNGTVVK…NKGKAKLTIK (69 aa)). Residues 693–733 (ADKDKSSNNTKPKTHVNNTKDNSEPEQRRDSSKKRAWNEDN) form a disordered region. A compositionally biased stretch (polar residues) spans 699–712 (SNNTKPKTHVNNTK). Residues 713–722 (DNSEPEQRRD) are compositionally biased toward basic and acidic residues.

This sequence belongs to the polyribonucleotide nucleotidyltransferase family. Requires Mg(2+) as cofactor.

The protein resides in the cytoplasm. The catalysed reaction is RNA(n+1) + phosphate = RNA(n) + a ribonucleoside 5'-diphosphate. Its function is as follows. Involved in mRNA degradation. Catalyzes the phosphorolysis of single-stranded polyribonucleotides processively in the 3'- to 5'-direction. The polypeptide is Polyribonucleotide nucleotidyltransferase (Rickettsia peacockii (strain Rustic)).